The chain runs to 369 residues: Protein-glutamate methylesterase/protein-glutamine glutaminase (369 aa).

The region spanning 6-122 is the Response regulatory domain; it reads RAVVADDSHF…SMEMSRLKDQ (117 aa). Asp-56 is modified (4-aspartylphosphate). The tract at residues 136–178 is disordered; it reads GATGSRSGTGSDSGTAPTTAGGSATDRRGTGGSSGQTTYVANP. Residues 138 to 159 are compositionally biased toward low complexity; sequence TGSRSGTGSDSGTAPTTAGGSA. Residues 173–367 enclose the CheB-type methylesterase domain; the sequence is TYVANPTLVI…DGVIDTITTE (195 aa). Residues Ser-185, His-212, and Asp-309 contribute to the active site.

Belongs to the CheB family. Phosphorylated by CheA. Phosphorylation of the N-terminal regulatory domain activates the methylesterase activity.

The protein localises to the cytoplasm. The enzyme catalyses [protein]-L-glutamate 5-O-methyl ester + H2O = L-glutamyl-[protein] + methanol + H(+). It carries out the reaction L-glutaminyl-[protein] + H2O = L-glutamyl-[protein] + NH4(+). In terms of biological role, involved in chemotaxis. Part of a chemotaxis signal transduction system that modulates chemotaxis in response to various stimuli. Catalyzes the demethylation of specific methylglutamate residues introduced into the chemoreceptors (methyl-accepting chemotaxis proteins or MCP) by CheR. Also mediates the irreversible deamidation of specific glutamine residues to glutamic acid. This chain is Protein-glutamate methylesterase/protein-glutamine glutaminase, found in Haloarcula marismortui (strain ATCC 43049 / DSM 3752 / JCM 8966 / VKM B-1809) (Halobacterium marismortui).